The following is a 50-amino-acid chain: uncharacterized protein (50 aa).

A signal peptide spans 1–22 (MSKVAALGWGTLVYLGVGLLLA).

This is an uncharacterized protein from Dictyostelium discoideum (Social amoeba).